A 161-amino-acid chain; its full sequence is Insulin-like growth factor 1, juvenile form (161 aa).

The interval 45-73 (GPETLCGAELVDTLQFVCGDRGFYFSKPT) is b. 3 disulfide bridges follow: Cys-50–Cys-92, Cys-62–Cys-105, and Cys-91–Cys-96. Residues 74–85 (GYGPSSRRSHNR) are c. Positions 86–106 (GIVDECCFQSCELRRLEMYCA) are a. Residues 107–114 (PVKPGKTP) form a d region. Residues 111–161 (GKTPRSVRAQRHTDSPRTAKKPLPGQSHSSYKEVHQKNSSRGNTGGRNYRI) form a disordered region. The propeptide at 115–161 (RSVRAQRHTDSPRTAKKPLPGQSHSSYKEVHQKNSSRGNTGGRNYRI) is e peptide.

Belongs to the insulin family.

The protein localises to the secreted. In terms of biological role, the insulin-like growth factors, isolated from plasma, are structurally and functionally related to insulin but have a much higher growth-promoting activity. Acts as a ligand for IGF1R. Binds to the alpha subunit of IGF1R, leading to the activation of the intrinsic tyrosine kinase activity which autophosphorylates tyrosine residues in the beta subunit thus initiatiating a cascade of down-stream signaling events leading to activation of the PI3K-AKT/PKB and the Ras-MAPK pathways. Binds to integrins. Its binding to integrins and subsequent ternary complex formation with integrins and IGFR1 are essential for IGF1 signaling. The chain is Insulin-like growth factor 1, juvenile form from Cyprinus carpio (Common carp).